The following is a 1292-amino-acid chain: SH3 and multiple ankyrin repeat domains protein 2 (1292 aa).

A PDZ domain is found at 56–150 (TVVLQKKDNE…HLVLKVVTVT (95 aa)). Disordered stretches follow at residues 155-176 (PDDTARKKAPPPPKRAPTTALS), 331-393 (MPDA…SDNV), 488-508 (IKEPSTSSSGKSSQGSSMETD), 604-656 (SSNA…KLLD), 671-743 (ALKE…EKKN), 774-811 (LTESEEAEKDPPPENSNSPVSEPREELENSIPKASECG), and 938-968 (IEEVDSRSGSDHHLETTSTISTVSSISTLSS). Positions 338 to 354 (IPPPPATLPPSPPPPSP) are enriched in pro residues. Low complexity predominate over residues 355 to 365 (SSFNSPKSPAP). The span at 375–384 (FTQNSGTKSP) shows a compositional bias: polar residues. Residues 492 to 504 (STSSSGKSSQGSS) are compositionally biased toward low complexity. Polar residues predominate over residues 604-623 (SSNAFTNNDSSHQGDVSNAR). Residues 719–743 (KRQETESKHEPDSSKEEKRQGEKKN) show a composition bias toward basic and acidic residues. The span at 941 to 952 (VDSRSGSDHHLE) shows a compositional bias: basic and acidic residues. The segment covering 953–968 (TTSTISTVSSISTLSS) has biased composition (low complexity). The SH3-binding signature appears at 991–997 (PPVPPKP). A disordered region spans residues 1087–1115 (TKTGEGLDSPTGMKTASLSTRGTDALSTV). The span at 1098–1115 (GMKTASLSTRGTDALSTV) shows a compositional bias: polar residues. The SAM domain occupies 1229 to 1292 (WTKQDVAEWL…ERALKQLLDR (64 aa)).

This sequence belongs to the SHANK family.

The protein resides in the cytoplasm. Its subcellular location is the synapse. The protein localises to the postsynaptic density. Its function is as follows. Seems to be an adapter protein in the postsynaptic density (PSD) of excitatory synapses that interconnects receptors of the postsynaptic membrane including NMDA-type and metabotropic glutamate receptors, and the actin-based cytoskeleton. May play a role in the structural and functional organization of the dendritic spine and synaptic junction. The protein is SH3 and multiple ankyrin repeat domains protein 2 (shank2) of Xenopus laevis (African clawed frog).